Consider the following 351-residue polypeptide: Methionine import ATP-binding protein MetN (351 aa).

The 246-residue stretch at 2–247 folds into the ABC transporter domain; the sequence is ITTSGLTKVY…PGSELAAALF (246 aa). An ATP-binding site is contributed by 38–45; it reads GQSGAGKS.

This sequence belongs to the ABC transporter superfamily. Methionine importer (TC 3.A.1.24) family. In terms of assembly, the complex is composed of two ATP-binding proteins (MetN), two transmembrane proteins (MetI) and a solute-binding protein (MetQ).

Its subcellular location is the cell membrane. The catalysed reaction is L-methionine(out) + ATP + H2O = L-methionine(in) + ADP + phosphate + H(+). It catalyses the reaction D-methionine(out) + ATP + H2O = D-methionine(in) + ADP + phosphate + H(+). In terms of biological role, part of the ABC transporter complex MetNIQ involved in methionine import. Responsible for energy coupling to the transport system. This Streptomyces coelicolor (strain ATCC BAA-471 / A3(2) / M145) protein is Methionine import ATP-binding protein MetN.